A 1072-amino-acid polypeptide reads, in one-letter code: Integrin alpha-6 (1072 aa).

The N-terminal stretch at 1–18 is a signal peptide; that stretch reads MAAALLLYLPLLPGLAGA. Residues 19–1010 are Extracellular-facing; it reads FNLDAENVIG…FPAKPVALYT (992 aa). 7 FG-GAP repeats span residues 23–88, 94–160, 170–223, 238–295, 296–357, 358–413, and 414–476; these read AENV…DTRC, DEDT…IKDD, DGRL…FYDL, RQDK…QRAL, SLEH…KWEG, IKPI…GINT, and EPAQ…VQPD. An N-linked (GlcNAc...) asparagine glycan is attached at Asn71. 3 disulfide bridges follow: Cys79–Cys88, Cys125–Cys148, and Cys169–Cys182. Asn217 and Asn278 each carry an N-linked (GlcNAc...) asparagine glycan. Residues Asp318, Asn320, Asp322, and Asp326 each coordinate Ca(2+). Residue Asn364 is glycosylated (N-linked (GlcNAc...) asparagine). Ca(2+)-binding residues include Asp380, Asn382, Asp384, Tyr386, Asp388, Asp438, Asp440, Asn442, Tyr444, and Asp446. Residues Cys498 and Cys557 are joined by a disulfide bond. Residues Asn515 and Asn609 are each glycosylated (N-linked (GlcNAc...) asparagine). 2 disulfides stabilise this stretch: Cys625-Cys631 and Cys725-Cys736. 3 N-linked (GlcNAc...) asparagine glycosylation sites follow: Asn730, Asn747, and Asn780. Disulfide bonds link Cys880-Cys927 and Cys933-Cys938. Asn957 carries an N-linked (GlcNAc...) asparagine glycan. A helical transmembrane segment spans residues 1011-1036; it reads GVPWWIIAVAIFAGVLMLALLVFLLW. Topologically, residues 1037-1072 are cytoplasmic; sequence KCGFFKRSKKDHYDATYHKAEIHAQPSDKERLTSDA. A lipid anchor (S-palmitoyl cysteine; by DHHC3) is attached at Cys1038. Residues 1039–1043 carry the GFFKR motif motif; sequence GFFKR. The residue at position 1070 (Ser1070) is a Phosphoserine; by CaMK2.

This sequence belongs to the integrin alpha chain family. As to quaternary structure, heterodimer of an alpha and a beta subunit. The alpha subunit is composed of a heavy and a light chain linked by a disulfide bond. Alpha-6 associates with either beta-1 (ITGB1) or beta-4 (ITGB4) to form ITGA6:ITGB1 and ITGA6:ITGB4, respectively. Post-translationally, phosphorylated in vivo.

It localises to the cell membrane. Functionally, integrin alpha-6/beta-1 (ITGA6:ITGB1) is a receptor for laminin on platelets. Integrin alpha-6/beta-1 (ITGA6:ITGB1) is present in oocytes and is involved in sperm-egg fusion. Integrin alpha-6/beta-4 (ITGA6:ITGB4) is a receptor for laminin in epithelial cells and it plays a critical structural role in the hemidesmosome. The chain is Integrin alpha-6 (ITGA6) from Gallus gallus (Chicken).